A 1064-amino-acid chain; its full sequence is Serine/threonine protein kinase KIN1 (1064 aa).

The segment at 1–113 (MDDYHVNTAF…SSQGMPKQFH (113 aa)) is disordered. Residues 8–36 (TAFSMGRGNQQDDGNSESNSMHTQPSTMA) show a composition bias toward polar residues. Residues 74-91 (AEQKERQVELEGKSRENA) show a composition bias toward basic and acidic residues. The span at 93 to 108 (KPNTTSQSRVSSSQGM) shows a compositional bias: polar residues. Residues 120-398 (WEFVETVGAG…LKQVVEHHWM (279 aa)) enclose the Protein kinase domain. Residues 126–134 (VGAGSMGKV) and Lys149 contribute to the ATP site. The active-site Proton acceptor is the Asp269. The residue at position 534 (Ser534) is a Phosphoserine. Positions 549–621 (SEPEATLATK…SPTPQGNDYQ (73 aa)) are disordered. Residues 557 to 571 (TKDTSVPFTPKNSDG) show a composition bias toward polar residues. Ser593 is subject to Phosphoserine. Over residues 598-608 (KSSDNQRREME) the composition is skewed to basic and acidic residues. Ser646 carries the post-translational modification Phosphoserine. Disordered stretches follow at residues 652 to 672 (TIEQ…QKTH), 694 to 714 (MNEP…FPAL), 762 to 797 (EGSD…HARR), 823 to 843 (LESS…QTND), and 958 to 1016 (HESI…GMTT). The segment covering 654-670 (EQTSVNSNNSINKPVQK) has biased composition (polar residues). Phosphoserine is present on Ser764. The segment covering 779-794 (KGRKLHPSARAKSVGH) has biased composition (basic residues). Polar residues-rich tracts occupy residues 832–843 (DSLGNVTSQTND), 963–989 (RQGS…SITE), and 998–1016 (GTSL…GMTT). Residue Ser986 is modified to Phosphoserine. Residues 1015 to 1064 (TTTEKEPIKFEIHIVKVRIVGLAGVHFKKISGNTWLYKELASSILKELKL) form the KA1 domain.

It belongs to the protein kinase superfamily. CAMK Ser/Thr protein kinase family. NIM1 subfamily. As to quaternary structure, interacts with SEC9 and SRO7. In terms of processing, autophosphorylated.

Its subcellular location is the cytoplasm. It is found in the cell membrane. The catalysed reaction is L-seryl-[protein] + ATP = O-phospho-L-seryl-[protein] + ADP + H(+). It catalyses the reaction L-threonyl-[protein] + ATP = O-phospho-L-threonyl-[protein] + ADP + H(+). Its function is as follows. Serine/threonine protein kinase involved in the regulation of exocytosis. Induces phosphorylation of SEC9 and its release from the plasma membrane to the cytosol. The sequence is that of Serine/threonine protein kinase KIN1 (KIN1) from Saccharomyces cerevisiae (strain ATCC 204508 / S288c) (Baker's yeast).